A 256-amino-acid chain; its full sequence is Glucosamine-6-phosphate deaminase (256 aa).

Asp-68 (proton acceptor; for enolization step) is an active-site residue. Asn-137 serves as the catalytic For ring-opening step. The Proton acceptor; for ring-opening step role is filled by His-139. Glu-144 (for ring-opening step) is an active-site residue.

Belongs to the glucosamine/galactosamine-6-phosphate isomerase family. NagB subfamily.

It carries out the reaction alpha-D-glucosamine 6-phosphate + H2O = beta-D-fructose 6-phosphate + NH4(+). The protein operates within amino-sugar metabolism; N-acetylneuraminate degradation; D-fructose 6-phosphate from N-acetylneuraminate: step 5/5. Its function is as follows. Catalyzes the reversible isomerization-deamination of glucosamine 6-phosphate (GlcN6P) to form fructose 6-phosphate (Fru6P) and ammonium ion. The sequence is that of Glucosamine-6-phosphate deaminase from Mycoplasmopsis pulmonis (strain UAB CTIP) (Mycoplasma pulmonis).